Here is a 440-residue protein sequence, read N- to C-terminus: Transposon Ty1-A Gag polyprotein (440 aa).

Composition is skewed to polar residues over residues 1–23 (MESQ…SVTS), 48–60 (TKAN…TPAS), 71–93 (SPQT…MMTQ), and 127–152 (QSQF…GNTF). Disordered stretches follow at residues 1-93 (MESQ…MMTQ), 126-173 (PQSQ…RPPP), and 352-440 (GSRN…PETY). A compositionally biased stretch (low complexity) spans 153–165 (TDSSSADSDMTST). The interval 299–401 (NNGIHINNKV…NSKSKTARAH (103 aa)) is RNA-binding. Low complexity predominate over residues 402–418 (NVSTSNNSPSTDNDSIS). The residue at position 416 (serine 416) is a Phosphoserine. A compositionally biased stretch (polar residues) spans 419-428 (KSTTEPIQLN). Basic and acidic residues predominate over residues 429-440 (NKHDLHLRPETY).

Homotrimer.

It is found in the cytoplasm. Its function is as follows. Capsid protein (CA) is the structural component of the virus-like particle (VLP), forming the shell that encapsulates the retrotransposons dimeric RNA genome. The particles are assembled from trimer-clustered units and there are holes in the capsid shells that allow for the diffusion of macromolecules. CA also has nucleocapsid-like chaperone activity, promoting primer tRNA(i)-Met annealing to the multipartite primer-binding site (PBS), dimerization of Ty1 RNA and initiation of reverse transcription. This Saccharomyces cerevisiae (strain ATCC 204508 / S288c) (Baker's yeast) protein is Transposon Ty1-A Gag polyprotein (TY1A-A).